A 215-amino-acid chain; its full sequence is Protein-L-isoaspartate O-methyltransferase (215 aa).

Serine 62 is an active-site residue.

The protein belongs to the methyltransferase superfamily. L-isoaspartyl/D-aspartyl protein methyltransferase family.

The protein resides in the cytoplasm. It carries out the reaction [protein]-L-isoaspartate + S-adenosyl-L-methionine = [protein]-L-isoaspartate alpha-methyl ester + S-adenosyl-L-homocysteine. Its function is as follows. Catalyzes the methyl esterification of L-isoaspartyl residues in peptides and proteins that result from spontaneous decomposition of normal L-aspartyl and L-asparaginyl residues. It plays a role in the repair and/or degradation of damaged proteins. The protein is Protein-L-isoaspartate O-methyltransferase of Bradyrhizobium sp. (strain BTAi1 / ATCC BAA-1182).